The sequence spans 120 residues: Large ribosomal subunit protein uL18 (120 aa).

The span at 1–10 shows a compositional bias: basic and acidic residues; that stretch reads MSTPRKEQTQ. The interval 1 to 25 is disordered; it reads MSTPRKEQTQKRHRRLRRHLEGTPE.

Belongs to the universal ribosomal protein uL18 family. Part of the 50S ribosomal subunit; part of the 5S rRNA/L5/L18/L25 subcomplex. Contacts the 5S and 23S rRNAs.

In terms of biological role, this is one of the proteins that bind and probably mediate the attachment of the 5S RNA into the large ribosomal subunit, where it forms part of the central protuberance. The sequence is that of Large ribosomal subunit protein uL18 from Synechococcus sp. (strain RCC307).